Consider the following 283-residue polypeptide: Acyl-coenzyme A diphosphatase FITM2 (283 aa).

Low complexity predominate over residues 1-11 (MSTRRSSTRAD). The interval 1-21 (MSTRRSSTRADSTTKRPASPN) is disordered. At 1-39 (MSTRRSSTRADSTTKRPASPNSTPNAALGIFVAIARQIL) the chain is on the cytoplasmic side. The chain crosses the membrane as a helical span at residues 40–60 (FIDARKVALFYLAFVTVLSFI). The Lumenal portion of the chain corresponds to 61-81 (ESRIELDSTYYLVQKHSVLNQ). The chain crosses the membrane as a helical span at residues 82-102 (YGVKMGWFWTLVIVGPFIWFS). The Cytoplasmic portion of the chain corresponds to 103–120 (SKAHNRRDRDQPIVDVCR). The helical transmembrane segment at 121-141 (LGVGTACWYFSVQFFHKVLAL) threads the bilayer. Residues 142–168 (TSMCDKGRTLTRAQCSEKEGVWTPGYD) are Lumenal-facing. Residues 169–189 (ISGHCFLMIYSILIITEEAIA) traverse the membrane as a helical segment. Histidine 172 is an active-site residue. Over 190–219 (YRHYQQVTDAVHQMDGDREEHDRLTRCIQY) the chain is Cytoplasmic. A run of 2 helical transmembrane segments spans residues 220–240 (FFVA…ISVL) and 241–261 (YYHI…CWFV). Histidine 243 is an active-site residue. Residues 262-283 (TYRMLYPAGFLASPIRRTVGRK) lie on the Cytoplasmic side of the membrane.

This sequence belongs to the FIT family. FIT2 subfamily.

It is found in the endoplasmic reticulum membrane. It carries out the reaction an acyl-CoA + H2O = an acyl-4'-phosphopantetheine + adenosine 3',5'-bisphosphate + 2 H(+). Fatty acyl-coenzyme A (CoA) diphosphatase that hydrolyzes fatty acyl-CoA to yield acyl-4'-phosphopantetheine and adenosine 3',5'-bisphosphate. Preferentially hydrolyzes unsaturated long-chain acyl-CoA substrates in the endoplasmic reticulum (ER) lumen. This catalytic activity is required for maintaining ER structure and for lipid droplets (LDs) biogenesis, which are lipid storage organelles involved in maintaining lipid and energy homeostasis. May directly bind to diacylglycerol (DAGs) and triacylglycerol, which is also important for LD biogenesis. May support directional budding of nacent LDs from the ER into the cytosol by reducing DAG levels at sites of LD formation. May play a role in the regulation of cell morphology, ER morphology and cytoskeletal organization. This chain is Acyl-coenzyme A diphosphatase FITM2, found in Caenorhabditis elegans.